Consider the following 120-residue polypeptide: Large ribosomal subunit protein uL18 (120 aa).

The protein belongs to the universal ribosomal protein uL18 family. In terms of assembly, part of the 50S ribosomal subunit; part of the 5S rRNA/L5/L18/L25 subcomplex. Contacts the 5S and 23S rRNAs.

Its function is as follows. This is one of the proteins that bind and probably mediate the attachment of the 5S RNA into the large ribosomal subunit, where it forms part of the central protuberance. The sequence is that of Large ribosomal subunit protein uL18 from Beijerinckia indica subsp. indica (strain ATCC 9039 / DSM 1715 / NCIMB 8712).